The sequence spans 743 residues: UV-stimulated scaffold protein A (743 aa).

A VHS-like region spans residues 2–145 (DQKLSELVEV…HFLKQNKKID (144 aa)). Residues 147–199 (QDVRSRTQAERKREEEKQRRLENIYKEKVKKATAEMEDMLEEIQSSLTEMENC) adopt a coiled-coil conformation. Residues 221–310 (SDMRTKPTSQ…DDSDGDYEGS (90 aa)) form a disordered region. Over residues 226-252 (KPTSQSPSHSKSTSQSSAYSKSTSQVS) the composition is skewed to low complexity. Over residues 283–300 (SLGEGAKESDKSARKSDT) the composition is skewed to basic and acidic residues. A coiled-coil region spans residues 380 to 411 (ESLKCAIDVKKEIEAALKKYKEMNIDCHTKER). 2 disordered regions span residues 413-482 (VMTA…NDEL) and 500-525 (KALP…DLSQ). Residues 417–428 (SDDDDDDDEFEE) are compositionally biased toward acidic residues. Composition is skewed to basic and acidic residues over residues 429 to 447 (VPEK…REEY) and 510 to 522 (GEPK…RETD). Lysine 432 is covalently cross-linked (Glycyl lysine isopeptide (Lys-Gly) (interchain with G-Cter in ubiquitin)). The segment at 591–618 (KHKCLAPMPNGSLCERQDRYKCPFHGKI) adopts a UVSSA-type zinc-finger fold. The Zn(2+) site is built by cysteine 594, cysteine 604, cysteine 612, and histidine 615.

The protein belongs to the UVSSA family. In terms of processing, monoubiquitinated at Lys-432 in response to transcription stress; this promotes efficient transfer of TFIIH to stalled RNA polymerase II.

It localises to the chromosome. Factor involved in transcription-coupled nucleotide excision repair (TC-NER), a mechanism that rapidly removes RNA polymerase II-blocking lesions from the transcribed strand of active genes. Acts as a key adapter that promotes recruitment of factors involved in TC-NER. Facilitates the ubiquitination of the elongating form of RNA polymerase II (RNA pol IIo) at DNA damage sites, thereby promoting RNA pol IIo backtracking and access by the TC-NER machinery to lesion sites. Also promotes stabilization of ERCC6/CSB by recruiting deubiquitinating enzyme USP7 to TC-NER complexes, preventing UV-induced degradation of ERCC6 by the proteasome. Mediates the recruitment of the TFIIH complex and other factors that are required for nucleotide excision repair to RNA polymerase II. Also required to inactivate stalled RNA polymerase II by blocking the access of TCEA1/TFIIS, thereby preventing reactivation of RNA polymerase II. The protein is UV-stimulated scaffold protein A (uvssa) of Xenopus tropicalis (Western clawed frog).